We begin with the raw amino-acid sequence, 432 residues long: MVNEQIIDISGPLKGEIEVPGDKSMTHRAIMLASLAEGVSTIYKPLLGEDCRRTMDIFRLLGVEIKEDDEKLVVTSPGYQSFNTPHQVLYTGNSGTTTRLLAGLLSGLGIESVLSGDVSIGKRPMDRVLRPLKLMDANIEGIEDNYTPLIIKPSVIKGINYQMEVASAQVKSAILFASLFSKEPTIIKELDVSRNHTETMFKHFNIPIEAEGLSINTTPEAIRYIKPADFHVPGDISSAAFFIVAALITPGSDVTIHNVGINPTRSGIIDIVEKMGGNIQLFNQTTGAEPTASIRIQYTPMLQPITIEGELVPKAIDELPVIALLCTQAVGTSTIKDAEELKVKETNRIDTTADMLNLLGFELQPTNDGLIIHPSEFKTNATVDSLTDHRIGMMLAVASLLSSEPVKIKQFDAVNVSFPGFLPKLKLLENEG.

Positions 23, 24, and 28 each coordinate 3-phosphoshikimate. Lys23 lines the phosphoenolpyruvate pocket. Phosphoenolpyruvate is bound by residues Gly95 and Arg123. 3-phosphoshikimate contacts are provided by Ser167, Gln169, Asp317, and Lys344. Residue Gln169 participates in phosphoenolpyruvate binding. The active-site Proton acceptor is the Asp317. Phosphoenolpyruvate contacts are provided by Arg348 and Arg390.

It belongs to the EPSP synthase family. As to quaternary structure, monomer.

Its subcellular location is the cytoplasm. The enzyme catalyses 3-phosphoshikimate + phosphoenolpyruvate = 5-O-(1-carboxyvinyl)-3-phosphoshikimate + phosphate. It participates in metabolic intermediate biosynthesis; chorismate biosynthesis; chorismate from D-erythrose 4-phosphate and phosphoenolpyruvate: step 6/7. In terms of biological role, catalyzes the transfer of the enolpyruvyl moiety of phosphoenolpyruvate (PEP) to the 5-hydroxyl of shikimate-3-phosphate (S3P) to produce enolpyruvyl shikimate-3-phosphate and inorganic phosphate. This is 3-phosphoshikimate 1-carboxyvinyltransferase from Staphylococcus aureus (strain Newman).